We begin with the raw amino-acid sequence, 208 residues long: Large ribosomal subunit protein uL3 (208 aa).

The disordered stretch occupies residues 123 to 147; it reads RHGQSRGPMAHGSRYHRRPGSMGPV.

The protein belongs to the universal ribosomal protein uL3 family. Part of the 50S ribosomal subunit. Forms a cluster with proteins L14 and L19.

Functionally, one of the primary rRNA binding proteins, it binds directly near the 3'-end of the 23S rRNA, where it nucleates assembly of the 50S subunit. This Streptococcus sanguinis (strain SK36) protein is Large ribosomal subunit protein uL3.